Reading from the N-terminus, the 243-residue chain is ATP synthase subunit a (243 aa).

A run of 7 helical transmembrane segments spans residues 29 to 49 (NASLFMVLSTLIISLFCYIGL), 54 to 74 (ILPNSMQLIIEAIYNFIVSTI), 89 to 109 (VFTIFTFIATCNLLGVLPLGF), 114 to 134 (HIAVTFAISMVVFISVTAIGF), 144 to 164 (ILLPKGTPGWLAPMMVFIELF), 182 to 202 (IAGHTIIKVIAGFVIKMNIFL), and 208 to 228 (AFIIILIGFEIFVAILQAYIF).

Belongs to the ATPase A chain family. In terms of assembly, F-type ATPases have 2 components, CF(1) - the catalytic core - and CF(0) - the membrane proton channel. CF(1) has five subunits: alpha(3), beta(3), gamma(1), delta(1), epsilon(1). CF(0) has three main subunits: a(1), b(2) and c(9-12). The alpha and beta chains form an alternating ring which encloses part of the gamma chain. CF(1) is attached to CF(0) by a central stalk formed by the gamma and epsilon chains, while a peripheral stalk is formed by the delta and b chains.

Its subcellular location is the cell inner membrane. In terms of biological role, key component of the proton channel; it plays a direct role in the translocation of protons across the membrane. The sequence is that of ATP synthase subunit a from Ehrlichia chaffeensis (strain ATCC CRL-10679 / Arkansas).